The chain runs to 105 residues: ATP synthase subunit c (105 aa).

2 helical membrane passes run 37-57 (IGAG…GYIF) and 82-102 (SAIS…LIFV).

The protein belongs to the ATPase C chain family. F-type ATPases have 2 components, F(1) - the catalytic core - and F(0) - the membrane proton channel. F(1) has five subunits: alpha(3), beta(3), gamma(1), delta(1), epsilon(1). F(0) has three main subunits: a(1), b(2) and c(10-14). The alpha and beta chains form an alternating ring which encloses part of the gamma chain. F(1) is attached to F(0) by a central stalk formed by the gamma and epsilon chains, while a peripheral stalk is formed by the delta and b chains.

It localises to the cell membrane. In terms of biological role, f(1)F(0) ATP synthase produces ATP from ADP in the presence of a proton or sodium gradient. F-type ATPases consist of two structural domains, F(1) containing the extramembraneous catalytic core and F(0) containing the membrane proton channel, linked together by a central stalk and a peripheral stalk. During catalysis, ATP synthesis in the catalytic domain of F(1) is coupled via a rotary mechanism of the central stalk subunits to proton translocation. Functionally, key component of the F(0) channel; it plays a direct role in translocation across the membrane. A homomeric c-ring of between 10-14 subunits forms the central stalk rotor element with the F(1) delta and epsilon subunits. The polypeptide is ATP synthase subunit c (Mycoplasma pneumoniae (strain ATCC 29342 / M129 / Subtype 1) (Mycoplasmoides pneumoniae)).